We begin with the raw amino-acid sequence, 169 residues long: 3-hydroxyacyl-[acyl-carrier-protein] dehydratase FabZ (169 aa).

Residue histidine 66 is part of the active site.

It belongs to the thioester dehydratase family. FabZ subfamily.

The protein resides in the cytoplasm. The catalysed reaction is a (3R)-hydroxyacyl-[ACP] = a (2E)-enoyl-[ACP] + H2O. Functionally, involved in unsaturated fatty acids biosynthesis. Catalyzes the dehydration of short chain beta-hydroxyacyl-ACPs and long chain saturated and unsaturated beta-hydroxyacyl-ACPs. This chain is 3-hydroxyacyl-[acyl-carrier-protein] dehydratase FabZ, found in Helicobacter hepaticus (strain ATCC 51449 / 3B1).